The chain runs to 398 residues: S-adenosylmethionine decarboxylase proenzyme (398 aa).

Active-site residues include E18 and E21. S78 serves as the catalytic Schiff-base intermediate with substrate; via pyruvic acid. Pyruvic acid (Ser); by autocatalysis is present on S78. The active-site Proton donor; for catalytic activity is the C92. Active-site proton acceptor; for processing activity residues include S243 and H256.

Belongs to the eukaryotic AdoMetDC family. The cofactor is pyruvate. Post-translationally, is synthesized initially as an inactive proenzyme. Formation of the active enzyme involves a self-maturation process in which the active site pyruvoyl group is generated from an internal serine residue via an autocatalytic post-translational modification. Two non-identical subunits are generated from the proenzyme in this reaction, and the pyruvate is formed at the N-terminus of the alpha chain, which is derived from the carboxyl end of the proenzyme. The post-translation cleavage follows an unusual pathway, termed non-hydrolytic serinolysis, in which the side chain hydroxyl group of the serine supplies its oxygen atom to form the C-terminus of the beta chain, while the remainder of the serine residue undergoes an oxidative deamination to produce ammonia and the pyruvoyl group blocking the N-terminus of the alpha chain.

The enzyme catalyses S-adenosyl-L-methionine + H(+) = S-adenosyl 3-(methylsulfanyl)propylamine + CO2. It participates in amine and polyamine biosynthesis; S-adenosylmethioninamine biosynthesis; S-adenosylmethioninamine from S-adenosyl-L-methionine: step 1/1. This Oryza sativa subsp. indica (Rice) protein is S-adenosylmethionine decarboxylase proenzyme (SAMDC).